The primary structure comprises 200 residues: Proteasome subunit beta 2 (200 aa).

Positions 1–7 (MEEKKTG) are cleaved as a propeptide — removed in mature form; by autocatalysis. Thr-8 functions as the Nucleophile in the catalytic mechanism.

This sequence belongs to the peptidase T1B family. As to quaternary structure, the 20S proteasome core is composed of 14 alpha and 14 beta subunits that assemble into four stacked heptameric rings, resulting in a barrel-shaped structure. The two inner rings, each composed of seven catalytic beta subunits, are sandwiched by two outer rings, each composed of seven alpha subunits. The catalytic chamber with the active sites is on the inside of the barrel. Has a gated structure, the ends of the cylinder being occluded by the N-termini of the alpha-subunits. Is capped at one or both ends by the proteasome regulatory ATPase, PAN.

It is found in the cytoplasm. The enzyme catalyses Cleavage of peptide bonds with very broad specificity.. With respect to regulation, the formation of the proteasomal ATPase PAN-20S proteasome complex, via the docking of the C-termini of PAN into the intersubunit pockets in the alpha-rings, triggers opening of the gate for substrate entry. Interconversion between the open-gate and close-gate conformations leads to a dynamic regulation of the 20S proteasome proteolysis activity. Component of the proteasome core, a large protease complex with broad specificity involved in protein degradation. The chain is Proteasome subunit beta 2 from Thermococcus gammatolerans (strain DSM 15229 / JCM 11827 / EJ3).